Here is a 392-residue protein sequence, read N- to C-terminus: GTPase Obg (392 aa).

The Obg domain occupies 1-159; that stretch reads MKFVDEAEIR…RNLKLELMLL (159 aa). Residues 121-146 form a disordered region; it reads GFHGLGNTRFKSSTNRAPRQKTNGTP. The span at 129–145 shows a compositional bias: polar residues; it reads RFKSSTNRAPRQKTNGT. One can recognise an OBG-type G domain in the interval 160–333; the sequence is ADVGLLGMPN…LCNDVMDFIE (174 aa). GTP contacts are provided by residues 166 to 173, 191 to 195, 213 to 216, 283 to 286, and 314 to 316; these read GMPNAGKS, FTTLV, DIPG, NKVD, and SAF. Residues serine 173 and threonine 193 each coordinate Mg(2+).

The protein belongs to the TRAFAC class OBG-HflX-like GTPase superfamily. OBG GTPase family. In terms of assembly, monomer. It depends on Mg(2+) as a cofactor.

The protein resides in the cytoplasm. Functionally, an essential GTPase which binds GTP, GDP and possibly (p)ppGpp with moderate affinity, with high nucleotide exchange rates and a fairly low GTP hydrolysis rate. Plays a role in control of the cell cycle, stress response, ribosome biogenesis and in those bacteria that undergo differentiation, in morphogenesis control. The protein is GTPase Obg of Alteromonas mediterranea (strain DSM 17117 / CIP 110805 / LMG 28347 / Deep ecotype).